The chain runs to 554 residues: Suppressor of hairless homolog (554 aa).

Residues 1–31 form a disordered region; the sequence is MYHPHHLPAHGQVQSHQHREDAAATSSRDVN. 3 consecutive DNA-binding regions follow at residues 83 to 90, 218 to 227, and 291 to 323; these read KSYGNEKR, RLRSQTVSTR, and RKVDKQTAILDADDPVSQLHKCAFYLKDTERMY. The IPT/TIG domain maps to 381-471; the sequence is PNVHSLQLNG…YPTNLTFTFT (91 aa). Residues 489–554 form a disordered region; the sequence is GSKRPSASMP…NGANMLRTAS (66 aa). A compositionally biased stretch (basic and acidic residues) spans 508–519; the sequence is DSGRGNESDRGD.

Belongs to the Su(H) family. As to quaternary structure, interacts with activated Notch proteins.

Its subcellular location is the nucleus. Transcriptional regulator that plays a central role in Notch signaling, a signaling pathway involved in cell-cell communication that regulates a broad spectrum of cell-fate determinations. Acts as a transcriptional repressor when it is not associated with Notch proteins. When associated with some Notch protein, it acts as a transcriptional activator that activates transcription of Notch target genes. Required for the transcriptional expression of Brachyury, suggesting that it participates in notochord differentiation. This is Suppressor of hairless homolog (Su(H)) from Ciona intestinalis (Transparent sea squirt).